We begin with the raw amino-acid sequence, 478 residues long: Protein nucleotidyltransferase YdiU (478 aa).

ATP is bound by residues glycine 84, glycine 86, arginine 87, lysine 107, aspartate 119, glycine 120, arginine 170, and arginine 177. The active-site Proton acceptor is the aspartate 246. Mg(2+) contacts are provided by asparagine 247 and aspartate 256. Aspartate 256 is a binding site for ATP.

This sequence belongs to the SELO family. It depends on Mg(2+) as a cofactor. The cofactor is Mn(2+).

The catalysed reaction is L-seryl-[protein] + ATP = 3-O-(5'-adenylyl)-L-seryl-[protein] + diphosphate. It carries out the reaction L-threonyl-[protein] + ATP = 3-O-(5'-adenylyl)-L-threonyl-[protein] + diphosphate. It catalyses the reaction L-tyrosyl-[protein] + ATP = O-(5'-adenylyl)-L-tyrosyl-[protein] + diphosphate. The enzyme catalyses L-histidyl-[protein] + UTP = N(tele)-(5'-uridylyl)-L-histidyl-[protein] + diphosphate. The catalysed reaction is L-seryl-[protein] + UTP = O-(5'-uridylyl)-L-seryl-[protein] + diphosphate. It carries out the reaction L-tyrosyl-[protein] + UTP = O-(5'-uridylyl)-L-tyrosyl-[protein] + diphosphate. Its function is as follows. Nucleotidyltransferase involved in the post-translational modification of proteins. It can catalyze the addition of adenosine monophosphate (AMP) or uridine monophosphate (UMP) to a protein, resulting in modifications known as AMPylation and UMPylation. This Escherichia coli O9:H4 (strain HS) protein is Protein nucleotidyltransferase YdiU.